Consider the following 324-residue polypeptide: Aquaporin-4 (324 aa).

Residues 1–36 (MSDRPAARPWGKCGSLCRREEIMVAFKGVWTQAFWK) are Cytoplasmic-facing. 2 S-palmitoyl cysteine lipidation sites follow: Cys-13 and Cys-17. Residues 37-57 (AVTAEFLAMLIFVLLSLGSTI) traverse the membrane as a helical segment. Topologically, residues 58–69 (NWGGKENPLPVD) are extracellular. Residues 70–89 (MVLISLCFGLSIATMVQCFG) traverse the membrane as a helical segment. The Cytoplasmic segment spans residues 90-93 (HISG). An intramembrane region (discontinuously helical) is located at residues 94–101 (GHINPAVT). Positions 97–99 (NPA) match the NPA 1 motif. Residues 102 to 115 (VAMVCTRKISIAKS) lie on the Cytoplasmic side of the membrane. Position 111 is a phosphoserine; by PKG (Ser-111). The helical transmembrane segment at 116–136 (VFYIAAQCLGAIIGAGILYLV) threads the bilayer. Residues 137 to 155 (TPPSVVGGLGVTTVHGNLT) are Extracellular-facing. The N-linked (GlcNAc...) asparagine glycan is linked to Asn-153. A helical transmembrane segment spans residues 156-176 (AGHGLLVELIITFQLVFTIFA). Over 177–184 (SCDSKRTD) the chain is Cytoplasmic. A Phosphoserine; by PKC modification is found at Ser-180. A helical transmembrane segment spans residues 185 to 205 (VTGSIALAIGFSVAIGHLFAI). Asn-206 carries N-linked (GlcNAc...) asparagine glycosylation. At 206–208 (NYT) the chain is on the extracellular side. Positions 209-222 (GASMNPARSFGPAV) form an intramembrane region, discontinuously helical. Residues 213–215 (NPA) carry the NPA 2 motif. Topologically, residues 223 to 231 (IMGNWENHW) are extracellular. The chain crosses the membrane as a helical span at residues 232–252 (IYWVGPIIGAVLAGGLYEYVF). The Cytoplasmic segment spans residues 253 to 324 (CPDVELKRRF…PSGEIAQTQH (72 aa)). Phosphoserine is present on residues Ser-276 and Ser-285. A Phosphothreonine modification is found at Thr-289. The segment covering 305–316 (DRGDEKKGKDPS) has biased composition (basic and acidic residues). The interval 305 to 324 (DRGDEKKGKDPSGEIAQTQH) is disordered.

This sequence belongs to the MIP/aquaporin (TC 1.A.8) family. As to quaternary structure, homotetramer. The tetramers can form oligomeric arrays in membranes. The size of the oligomers differs between tissues and is smaller in skeletal muscle than in brain. Interaction between AQP4 oligomeric arrays in close-by cells can contribute to cell-cell adhesion. Part of a complex containing MLC1, TRPV4, HEPACAM and ATP1B1. Phosphorylation by PKC at Ser-180 reduces conductance by 50%. Phosphorylation by PKG at Ser-111 in response to glutamate increases conductance by 40%. Post-translationally, isoform 2: Palmitoylated on its N-terminal region. Isoform 1: Not palmitoylated. Not expressed in kidney, Detectable in gastric parietal and brain astroglial cells. The absence of AQP4 in kidney may be critical for the extreme urinary concentration that occurs in this species (up to 5,000 mosmol/kg H(2)O).

It is found in the cell membrane. It localises to the basolateral cell membrane. Its subcellular location is the endosome membrane. The protein resides in the sarcolemma. The protein localises to the cell projection. It catalyses the reaction H2O(in) = H2O(out). Functionally, forms a water-specific channel. Plays an important role in brain water homeostasis and in glymphatic solute transport. Required for a normal rate of water exchange across the blood brain interface. Required for normal levels of cerebrospinal fluid influx into the brain cortex and parenchyma along paravascular spaces that surround penetrating arteries, and for normal drainage of interstitial fluid along paravenous drainage pathways. Thereby, it is required for normal clearance of solutes from the brain interstitial fluid, including soluble beta-amyloid peptides derived from APP. Plays a redundant role in urinary water homeostasis and urinary concentrating ability. The chain is Aquaporin-4 (AQP4) from Dipodomys merriami (Merriam's kangaroo rat).